A 269-amino-acid polypeptide reads, in one-letter code: Signal recognition particle receptor subunit beta (269 aa).

The chain crosses the membrane as a helical span at residues 35-55; that stretch reads LLSVAVAVLAVLLTLVFWKFI. GTP-binding positions include 69–77 and 90–93; these read GLCDSGKTL and TQTS. Ser-110 carries the post-translational modification Phosphoserine. Gly-118 lines the GTP pocket. Phosphothreonine is present on Thr-212. Ala-246 is a GTP binding site.

This sequence belongs to the SRP receptor beta subunit family. In terms of assembly, heterodimer with SRPRA.

The protein localises to the endoplasmic reticulum membrane. Functionally, component of the signal recognition particle (SRP) complex receptor (SR). Ensures, in conjunction with the SRP complex, the correct targeting of the nascent secretory proteins to the endoplasmic reticulum membrane system. May mediate the membrane association of SR. The chain is Signal recognition particle receptor subunit beta (Srprb) from Rattus norvegicus (Rat).